Here is a 112-residue protein sequence, read N- to C-terminus: Large ribosomal subunit protein uL22 (112 aa).

Belongs to the universal ribosomal protein uL22 family. Part of the 50S ribosomal subunit.

Functionally, this protein binds specifically to 23S rRNA; its binding is stimulated by other ribosomal proteins, e.g. L4, L17, and L20. It is important during the early stages of 50S assembly. It makes multiple contacts with different domains of the 23S rRNA in the assembled 50S subunit and ribosome. Its function is as follows. The globular domain of the protein is located near the polypeptide exit tunnel on the outside of the subunit, while an extended beta-hairpin is found that lines the wall of the exit tunnel in the center of the 70S ribosome. The chain is Large ribosomal subunit protein uL22 from Nitratidesulfovibrio vulgaris (strain DSM 19637 / Miyazaki F) (Desulfovibrio vulgaris).